The sequence spans 498 residues: Guanosine-5'-triphosphate,3'-diphosphate pyrophosphatase (498 aa).

The protein belongs to the GppA/Ppx family. GppA subfamily.

The catalysed reaction is guanosine 3'-diphosphate 5'-triphosphate + H2O = guanosine 3',5'-bis(diphosphate) + phosphate + H(+). Its pathway is purine metabolism; ppGpp biosynthesis; ppGpp from GTP: step 2/2. Functionally, catalyzes the conversion of pppGpp to ppGpp. Guanosine pentaphosphate (pppGpp) is a cytoplasmic signaling molecule which together with ppGpp controls the 'stringent response', an adaptive process that allows bacteria to respond to amino acid starvation, resulting in the coordinated regulation of numerous cellular activities. This is Guanosine-5'-triphosphate,3'-diphosphate pyrophosphatase from Pectobacterium carotovorum subsp. carotovorum (strain PC1).